The sequence spans 92 residues: Small ribosomal subunit protein uS19 (92 aa).

Belongs to the universal ribosomal protein uS19 family.

Its function is as follows. Protein S19 forms a complex with S13 that binds strongly to the 16S ribosomal RNA. The protein is Small ribosomal subunit protein uS19 of Streptococcus thermophilus (strain ATCC BAA-491 / LMD-9).